We begin with the raw amino-acid sequence, 123 residues long: MSTRTKALNAYRHGLRATRIAFRNDAEVLLAARAKMRSGMLCPPDPKLTTEDQIQHLEDVAVFLRRNLVQGKKVDGSSTKEPRYHLNIHKDTELGDNETIADPTARVKTNLKARPFKCSDKKQ.

Residues 1–24 (MSTRTKALNAYRHGLRATRIAFRN) constitute a mitochondrion transit peptide.

Belongs to the complex I LYR family. MZM1 subfamily. Interacts with RIP1.

The protein resides in the mitochondrion matrix. Its function is as follows. Assembly factor required for Rieske Fe-S protein RIP1 incorporation into the cytochrome b-c1 (CIII) complex. Functions as a chaperone, binding to this subunit within the mitochondrial matrix and stabilizing it prior to its translocation and insertion into the late CIII dimeric intermediate within the mitochondrial inner membrane. Modulates the mitochondrial matrix zinc pool. This Saccharomyces cerevisiae (strain RM11-1a) (Baker's yeast) protein is Mitochondrial zinc maintenance protein 1, mitochondrial (MZM1).